The sequence spans 417 residues: Transmembrane protease serine 11G (417 aa).

Topologically, residues 1 to 21 are cytoplasmic; that stretch reads MYQPGILVRRKRVWKPWTVAL. Residues 22–42 traverse the membrane as a helical; Signal-anchor for type II membrane protein segment; it reads ITVALLLALAVLIGLLVYFLV. The Extracellular portion of the chain corresponds to 43–417; sequence YDEKTHYYQA…RDWIKSKTSI (375 aa). The SEA domain maps to 46–165; that stretch reads KTHYYQASFW…PYLREMNAAQ (120 aa). Asparagine 60 carries an N-linked (GlcNAc...) asparagine glycan. Positions 186–416 constitute a Peptidase S1 domain; sequence IADGKPADKA…YRDWIKSKTS (231 aa). Cysteine 211 and cysteine 227 form a disulfide bridge. Residues histidine 226 and aspartate 271 each act as charge relay system in the active site. 2 disulfides stabilise this stretch: cysteine 336–cysteine 352 and cysteine 363–cysteine 392. Catalysis depends on serine 367, which acts as the Charge relay system.

The protein belongs to the peptidase S1 family.

The protein localises to the membrane. The protein is Transmembrane protease serine 11G (Tmprss11g) of Mus musculus (Mouse).